Consider the following 82-residue polypeptide: Omega-conotoxin-like TxO6 (82 aa).

A signal peptide spans 1-22 (MKLTCVVIVAVLFLTAWTLVMA). A propeptide spanning residues 23–50 (DDSNNGLANLFSKSRDEMEDPEAAKLEK) is cleaved from the precursor. Cystine bridges form between cysteine 53–cysteine 71, cysteine 60–cysteine 76, and cysteine 70–cysteine 81.

The protein belongs to the conotoxin O1 superfamily. Expressed by the venom duct.

Its subcellular location is the secreted. Functionally, omega-conotoxins act at presynaptic membranes, they bind and block voltage-gated calcium channels (Cav). This is Omega-conotoxin-like TxO6 from Conus textile (Cloth-of-gold cone).